A 377-amino-acid polypeptide reads, in one-letter code: NADH dehydrogenase [ubiquinone] 1 alpha subcomplex subunit 9, mitochondrial (377 aa).

Residues 1–35 (MAAAVRFRVVRALPMSRPAITAAATSVFCGSSHRQ) constitute a mitochondrion transit peptide. The residue at position 175 (Lys-175) is an N6-succinyllysine. N6-acetyllysine occurs at positions 189 and 370.

Belongs to the complex I NDUFA9 subunit family. Complex I is composed of 45 different subunits. This a component of the hydrophobic protein fraction. Interacts with BLOC1S1. Interacts with SLC2A4. Interacts with CLOCK. Interacts with RAB5IF. The cofactor is FAD. Acetylated on lysine residues. BLOC1S1 is required for acetylation. Acetylated by CLOCK in a circadian manner.

Its subcellular location is the mitochondrion matrix. In terms of biological role, accessory subunit of the mitochondrial membrane respiratory chain NADH dehydrogenase (Complex I), that is believed not to be involved in catalysis. Complex I functions in the transfer of electrons from NADH to the respiratory chain. The immediate electron acceptor for the enzyme is believed to be ubiquinone. This Mus musculus (Mouse) protein is NADH dehydrogenase [ubiquinone] 1 alpha subcomplex subunit 9, mitochondrial (Ndufa9).